A 447-amino-acid chain; its full sequence is Xylose isomerase (447 aa).

Catalysis depends on residues His-102 and Asp-105. Residues Glu-233, Glu-269, His-272, Asp-297, Asp-308, Asp-310, and Asp-340 each contribute to the Mg(2+) site.

This sequence belongs to the xylose isomerase family. Homotetramer. It depends on Mg(2+) as a cofactor.

The protein localises to the cytoplasm. The enzyme catalyses alpha-D-xylose = alpha-D-xylulofuranose. The chain is Xylose isomerase from Pediococcus pentosaceus (strain ATCC 25745 / CCUG 21536 / LMG 10740 / 183-1w).